A 296-amino-acid chain; its full sequence is Protoheme IX farnesyltransferase (296 aa).

At 1–9 (MIFKQYLQV) the chain is on the cytoplasmic side. The helical transmembrane segment at 10–28 (TKPGIIFGNLISVIGGFLL) threads the bilayer. The Periplasmic segment spans residues 29 to 37 (ASKGSIDYP). A helical membrane pass occupies residues 38–56 (LFIYTLVGVSLVVASGCVF). Topologically, residues 57–78 (NNYIDRDIDRKMERTKNRVLVK) are cytoplasmic. The chain crosses the membrane as a helical span at residues 79–97 (GLISPAVSLVYATLLGIAG). Residues 98–107 (FMLLWFGANP) are Periplasmic-facing. A helical transmembrane segment spans residues 108-126 (LACWLGVMGFVVYVGVYSL). Over 127–197 (YMKRHSVYGT…YQAANIPVLP (71 aa)) the chain is Cytoplasmic. The chain crosses the membrane as a helical span at residues 198 to 216 (VVKGISVAKNHITLYIIAF). Residues 217–228 (AVATLMLSLGGY) are Periplasmic-facing. A helical transmembrane segment spans residues 229–247 (AGYKYLVVAAAVSVWWLGM). The Cytoplasmic portion of the chain corresponds to 248-268 (ALRGYKVADDRIWARKLFGFS). The helical transmembrane segment at 269-287 (IIAITALSVMMSVDFMVPD) threads the bilayer. Topologically, residues 288-296 (SHTLLAAVW) are periplasmic.

This sequence belongs to the UbiA prenyltransferase family. Protoheme IX farnesyltransferase subfamily.

It localises to the cell inner membrane. The enzyme catalyses heme b + (2E,6E)-farnesyl diphosphate + H2O = Fe(II)-heme o + diphosphate. It functions in the pathway porphyrin-containing compound metabolism; heme O biosynthesis; heme O from protoheme: step 1/1. Converts heme B (protoheme IX) to heme O by substitution of the vinyl group on carbon 2 of heme B porphyrin ring with a hydroxyethyl farnesyl side group. The chain is Protoheme IX farnesyltransferase from Escherichia coli O1:K1 / APEC.